A 1051-amino-acid chain; its full sequence is Helicase POLQ-like (1051 aa).

Basic residues predominate over residues 1-10 (MANKHNLCKK). 2 disordered regions span residues 1 to 28 (MANK…AKRQ) and 61 to 112 (LFGT…APTD). 2 stretches are compositionally biased toward polar residues: residues 64 to 78 (TQAT…QSGS) and 89 to 102 (SFPS…NSAS). The segment covering 103 to 112 (KPDEASAPTD) has biased composition (basic and acidic residues). One can recognise a Helicase ATP-binding domain in the interval 274–446 (LPAIRQRKNL…FLNADVYTRG (173 aa)). 287 to 294 (LPTSGGKT) contacts ATP. Residues 391 to 394 (DELH) carry the DEAH box motif. The Helicase C-terminal domain maps to 497–689 (HLAGLISECA…NEAVGLQSLI (193 aa)).

It belongs to the helicase family. SKI2 subfamily.

It is found in the nucleus. It localises to the chromosome. It catalyses the reaction Couples ATP hydrolysis with the unwinding of duplex DNA by translocating in the 3'-5' direction.. The enzyme catalyses ATP + H2O = ADP + phosphate + H(+). Functionally, single-stranded 3'-5' DNA helicase that plays a key role in homology-driven double-strand break (DSB) repair. Involved in different DSB repair mechanisms that are guided by annealing of extensive stretches of complementary bases at break ends, such as microhomology-mediated end-joining (MMEJ), single-strand annealing (SSA) or synthesis-dependent strand annealing (SDSA). The polypeptide is Helicase POLQ-like (Drosophila melanogaster (Fruit fly)).